Reading from the N-terminus, the 253-residue chain is Ribonuclease HII (253 aa).

Residues 70 to 253 (NLIAGIDEVG…KSFEPIKSML (184 aa)) enclose the RNase H type-2 domain. Positions 76, 77, and 168 each coordinate a divalent metal cation.

The protein belongs to the RNase HII family. The cofactor is Mn(2+). Mg(2+) is required as a cofactor.

It is found in the cytoplasm. It carries out the reaction Endonucleolytic cleavage to 5'-phosphomonoester.. Endonuclease that specifically degrades the RNA of RNA-DNA hybrids. The protein is Ribonuclease HII of Streptococcus agalactiae serotype III (strain NEM316).